The sequence spans 118 residues: Large ribosomal subunit protein uL24 (118 aa).

It belongs to the universal ribosomal protein uL24 family. In terms of assembly, part of the 50S ribosomal subunit.

Functionally, one of two assembly initiator proteins, it binds directly to the 5'-end of the 23S rRNA, where it nucleates assembly of the 50S subunit. In terms of biological role, one of the proteins that surrounds the polypeptide exit tunnel on the outside of the subunit. This is Large ribosomal subunit protein uL24 from Prochlorococcus marinus (strain SARG / CCMP1375 / SS120).